Consider the following 90-residue polypeptide: Evasin P458 (90 aa).

An N-terminal signal peptide occupies residues 1 to 24 (MEVKTFAFLQIAVLIAFSLHSASA). 3 disulfide bridges follow: C44–C63, C48–C65, and C59–C76. A glycan (N-linked (GlcNAc...) asparagine) is linked at N47.

It localises to the secreted. In terms of biological role, salivary chemokine-binding protein which binds to host chemokines CXCL1, CXCL2, CXCL3, CXCL5, CXCL6 and CXCL13. The sequence is that of Evasin P458 from Ixodes ricinus (Common tick).